A 362-amino-acid chain; its full sequence is METTVRKQKKNLEMKKPSIYSLQLHEMQDWLKEQGEPKFRAGQIFDWLYKKRVKNYEDMSNLSKGLRDKLSNSFDITTLNTLVKQTSSDGTIKFLFQLYDGYSIETVLMRHEYGNSICVTTQVGCRIGCTFCASTLGGLKRNLEAGEIVAQVVEVQRALDETEERVSSLVVMGIGEPFDNYDNLMGFLRIINHEKGLHIGARHMTVSTSGIIPKIYKFAEEDLQINFAISLHAPNSELRSKLMPINRAYKLPDLMEAIKYYVNRTGRRITFEYGLFGGENDQVEHAEELAALLKGVKCHVNLIPVNYVPERDYVRTPREQIFLFEKTLKDRGVNVTIRREQGHDIDAACGQLRAKERKEETR.

Glutamate 105 functions as the Proton acceptor in the catalytic mechanism. The 234-residue stretch at 111–344 (HEYGNSICVT…VTIRREQGHD (234 aa)) folds into the Radical SAM core domain. A disulfide bridge links cysteine 118 with cysteine 349. Cysteine 125, cysteine 129, and cysteine 132 together coordinate [4Fe-4S] cluster. S-adenosyl-L-methionine-binding positions include 175–176 (GE), serine 207, 230–232 (SLH), and asparagine 306. Cysteine 349 acts as the S-methylcysteine intermediate in catalysis.

Belongs to the radical SAM superfamily. RlmN family. Requires [4Fe-4S] cluster as cofactor.

It localises to the cytoplasm. The enzyme catalyses adenosine(2503) in 23S rRNA + 2 reduced [2Fe-2S]-[ferredoxin] + 2 S-adenosyl-L-methionine = 2-methyladenosine(2503) in 23S rRNA + 5'-deoxyadenosine + L-methionine + 2 oxidized [2Fe-2S]-[ferredoxin] + S-adenosyl-L-homocysteine. It carries out the reaction adenosine(37) in tRNA + 2 reduced [2Fe-2S]-[ferredoxin] + 2 S-adenosyl-L-methionine = 2-methyladenosine(37) in tRNA + 5'-deoxyadenosine + L-methionine + 2 oxidized [2Fe-2S]-[ferredoxin] + S-adenosyl-L-homocysteine. Specifically methylates position 2 of adenine 2503 in 23S rRNA and position 2 of adenine 37 in tRNAs. The polypeptide is Probable dual-specificity RNA methyltransferase RlmN (Bacillus cereus (strain B4264)).